A 699-amino-acid chain; its full sequence is Polyribonucleotide nucleotidyltransferase (699 aa).

Residues Asp493 and Asp499 each contribute to the Mg(2+) site. The 61-residue stretch at Pro560–Ile620 folds into the KH domain. An S1 motif domain is found at Gly630–Ala697.

It belongs to the polyribonucleotide nucleotidyltransferase family. The cofactor is Mg(2+).

The protein resides in the cytoplasm. It catalyses the reaction RNA(n+1) + phosphate = RNA(n) + a ribonucleoside 5'-diphosphate. Functionally, involved in mRNA degradation. Catalyzes the phosphorolysis of single-stranded polyribonucleotides processively in the 3'- to 5'-direction. The chain is Polyribonucleotide nucleotidyltransferase from Thermosipho melanesiensis (strain DSM 12029 / CIP 104789 / BI429).